Here is a 277-residue protein sequence, read N- to C-terminus: Sulfur carrier protein FdhD (277 aa).

Residue Cys121 is the Cysteine persulfide intermediate of the active site. Phe260 to Arg265 provides a ligand contact to Mo-bis(molybdopterin guanine dinucleotide).

It belongs to the FdhD family.

It localises to the cytoplasm. Functionally, required for formate dehydrogenase (FDH) activity. Acts as a sulfur carrier protein that transfers sulfur from IscS to the molybdenum cofactor prior to its insertion into FDH. The chain is Sulfur carrier protein FdhD from Shigella flexneri serotype 5b (strain 8401).